Reading from the N-terminus, the 285-residue chain is 1,4-dihydroxy-2-naphthoyl-CoA synthase (285 aa).

Residues R45, 84 to 88 (SGGDQ), Y97, 129 to 133 (YAIGG), T155, S161, Y258, and K273 each bind substrate. Hydrogencarbonate is bound at residue 154 to 156 (QTG).

The protein belongs to the enoyl-CoA hydratase/isomerase family. MenB subfamily. Requires hydrogencarbonate as cofactor.

It carries out the reaction 2-succinylbenzoyl-CoA + H(+) = 1,4-dihydroxy-2-naphthoyl-CoA + H2O. It participates in quinol/quinone metabolism; 1,4-dihydroxy-2-naphthoate biosynthesis; 1,4-dihydroxy-2-naphthoate from chorismate: step 6/7. It functions in the pathway quinol/quinone metabolism; menaquinone biosynthesis. Converts o-succinylbenzoyl-CoA (OSB-CoA) to 1,4-dihydroxy-2-naphthoyl-CoA (DHNA-CoA). This chain is 1,4-dihydroxy-2-naphthoyl-CoA synthase, found in Haemophilus influenzae (strain ATCC 51907 / DSM 11121 / KW20 / Rd).